A 515-amino-acid polypeptide reads, in one-letter code: Bifunctional purine biosynthesis protein PurH (515 aa).

The MGS-like domain maps to 1-145; the sequence is MTKRALISVS…KNHASVTVVV (145 aa).

This sequence belongs to the PurH family.

The catalysed reaction is (6R)-10-formyltetrahydrofolate + 5-amino-1-(5-phospho-beta-D-ribosyl)imidazole-4-carboxamide = 5-formamido-1-(5-phospho-D-ribosyl)imidazole-4-carboxamide + (6S)-5,6,7,8-tetrahydrofolate. It catalyses the reaction IMP + H2O = 5-formamido-1-(5-phospho-D-ribosyl)imidazole-4-carboxamide. It functions in the pathway purine metabolism; IMP biosynthesis via de novo pathway; 5-formamido-1-(5-phospho-D-ribosyl)imidazole-4-carboxamide from 5-amino-1-(5-phospho-D-ribosyl)imidazole-4-carboxamide (10-formyl THF route): step 1/1. Its pathway is purine metabolism; IMP biosynthesis via de novo pathway; IMP from 5-formamido-1-(5-phospho-D-ribosyl)imidazole-4-carboxamide: step 1/1. The sequence is that of Bifunctional purine biosynthesis protein PurH from Streptococcus thermophilus (strain ATCC BAA-491 / LMD-9).